The following is an 85-amino-acid chain: NAD(P)H-quinone oxidoreductase subunit O (85 aa).

This sequence belongs to the complex I NdhO subunit family. In terms of assembly, NDH-1 can be composed of about 15 different subunits; different subcomplexes with different compositions have been identified which probably have different functions.

The protein localises to the cellular thylakoid membrane. The catalysed reaction is a plastoquinone + NADH + (n+1) H(+)(in) = a plastoquinol + NAD(+) + n H(+)(out). The enzyme catalyses a plastoquinone + NADPH + (n+1) H(+)(in) = a plastoquinol + NADP(+) + n H(+)(out). In terms of biological role, NDH-1 shuttles electrons from an unknown electron donor, via FMN and iron-sulfur (Fe-S) centers, to quinones in the respiratory and/or the photosynthetic chain. The immediate electron acceptor for the enzyme in this species is believed to be plastoquinone. Couples the redox reaction to proton translocation, and thus conserves the redox energy in a proton gradient. Cyanobacterial NDH-1 also plays a role in inorganic carbon-concentration. This Synechococcus sp. (strain CC9311) protein is NAD(P)H-quinone oxidoreductase subunit O.